A 567-amino-acid chain; its full sequence is ETHYLENE INSENSITIVE 3-like 3 protein (567 aa).

A coiled-coil region spans residues 24-44 (NVAEIDVSDEEIDADDLERRM). Disordered stretches follow at residues 55 to 81 (KERQ…AQRK) and 286 to 393 (IQQP…RNIL). Positions 69 to 79 (ETPKKISDQAQ) are enriched in basic and acidic residues. The DNA-binding element occupies 162-288 (SQFVLQDLQD…LNQEESLIQQ (127 aa)). The span at 286–299 (IQQPSSDNGNSNVT) shows a compositional bias: polar residues. Positions 300–312 (ETHRRGNNADRRK) are enriched in basic and acidic residues. The span at 363–372 (KHRRRKRPRI) shows a compositional bias: basic residues.

This sequence belongs to the EIN3 family. In terms of assembly, interacts with MYB72.

The protein resides in the nucleus. Functionally, probable transcription factor that may be involved in the ethylene response pathway. This is ETHYLENE INSENSITIVE 3-like 3 protein (EIL3) from Arabidopsis thaliana (Mouse-ear cress).